The primary structure comprises 257 residues: tRNA pseudouridine synthase A (257 aa).

The Nucleophile role is filled by Asp53. Tyr111 is a binding site for substrate.

This sequence belongs to the tRNA pseudouridine synthase TruA family. As to quaternary structure, homodimer.

It carries out the reaction uridine(38/39/40) in tRNA = pseudouridine(38/39/40) in tRNA. Functionally, formation of pseudouridine at positions 38, 39 and 40 in the anticodon stem and loop of transfer RNAs. This Xylella fastidiosa (strain M23) protein is tRNA pseudouridine synthase A.